The chain runs to 340 residues: Cytochrome P450 monooxygenase cheG (340 aa).

The N-linked (GlcNAc...) asparagine glycan is linked to N25. The chain crosses the membrane as a helical span at residues 37 to 57 (MLLGIPTVILSLTPAVLRLLI). Position 283 (C283) interacts with heme. The interval 308–340 (LPPGQGKPEKGSMPNGSMSPDTKAKVLFRSRKL) is disordered. N322 carries N-linked (GlcNAc...) asparagine glycosylation.

The protein belongs to the cytochrome P450 family. The cofactor is heme.

Its subcellular location is the membrane. The protein operates within secondary metabolite biosynthesis. Functionally, cytochrome P450 monooxygenase; part of the gene cluster that mediates the biosynthesis of chaetoglobosin A which has a unique inhibitory activity against actin polymerization in mammalian cells. Chaetoglobosin A and its intermediates are involved in the morphological differentiation of C.globosum. The first step of the pathway is the synthesis of prochaetoglobosin I via condensation of one acetyl-CoA, 8 malonyl-CoA, and a L-tryptophan molecule by the PKS-NRPS hybrid synthetase cheA, followed by reduction of backbone double bond to install desired geometry by the enoyl reductase cheB. Further multiple oxidation steps performed by the cytochrome P450 monooxygenases cheE and cheG, as well as by the FAD-linked oxidoreductase cheF, lead to the formation of chaetoglobosin A. Depending on the order of action of these reductases, distinct intermediates can be identified. Within the pathway, the cytochrome P450 monooxygenase cheE catalyzes a stereospecific epoxidation on prochaetoglobosin I, cytoglobosin D, and chaetoglobosin J intermediates. The FAD-linked oxidoreductase cheF performs dehydrogenation of the C-20 hydroxyl groups in the 20-dihyrochaetoglobosin A and cytoglobosin D intermediates. Finally, the cytochrome P450 monooxygenase cheG can catalyze the stereospecific dihydroxylation of prochaetoglobosin I and prochaetoglobosin IV at C-19 and C-20, respectively. The Diels-Alderase cheD may play a role in the post-PKS-NRPS biosynthetic steps catalyzing Diels-Alder cyclization. This chain is Cytochrome P450 monooxygenase cheG, found in Chaetomium globosum (strain ATCC 6205 / CBS 148.51 / DSM 1962 / NBRC 6347 / NRRL 1970) (Soil fungus).